Consider the following 472-residue polypeptide: UDP-N-acetylmuramate--L-alanine ligase (472 aa).

122-128 (GTHGKTT) provides a ligand contact to ATP.

Belongs to the MurCDEF family.

It is found in the cytoplasm. The catalysed reaction is UDP-N-acetyl-alpha-D-muramate + L-alanine + ATP = UDP-N-acetyl-alpha-D-muramoyl-L-alanine + ADP + phosphate + H(+). It participates in cell wall biogenesis; peptidoglycan biosynthesis. Its function is as follows. Cell wall formation. The protein is UDP-N-acetylmuramate--L-alanine ligase of Thermobifida fusca (strain YX).